The chain runs to 750 residues: Retron Eco8 OLD nuclease (750 aa).

The ATPase domain N-terminus stretch occupies residues 1-173; sequence MTIESIRVKN…IDLYDWNPIW (173 aa). An ATP-binding site is contributed by 33-37; it reads NVGKS. A dimerization domain region spans residues 174–260; sequence KLISNLNSFN…TQSDGTNSNK (87 aa). The segment at 261–390 is ATPase domain C-terminus; that stretch reads FLETLLHLLI…FSDNEARLFF (130 aa). The segment at 391 to 704 is toprim domain; it reads SEYIVFVEGA…SGWVTTFLNY (314 aa). Glutamate 398, glutamate 402, aspartate 450, aspartate 452, serine 623, and glutamate 641 together coordinate a divalent metal cation.

It belongs to the class 1 OLD nuclease family. As to quaternary structure, homodimer. The cofactor is a divalent metal cation.

Probable nuclease member of antiviral defense system retron Eco8, composed of an reverse transcriptase (RT), this nuclease and a non-coding RNA (ncRNA) encoded between them. Expression of retron Eco8 confers protection against bacteriophages T4, T6, T7 and SECphi4, SECphi6 and SECphi18. At multiplicity of infection (MOI) of 0.02 cultures slow growth when infected with SECphi4 but do not collapse, at MOI 2 cultures collapse. When the retron is cloned in another E.coli strain synthesizes msDNA (a branched RNA linked by a 2',5'-phosphodiester bond to a single-stranded DNA). The retron transcript serves as primer and template to the reaction, and codes for the RT. In Escherichia coli, this protein is Retron Eco8 OLD nuclease.